Reading from the N-terminus, the 296-residue chain is GTP cyclohydrolase FolE2 (296 aa).

This sequence belongs to the GTP cyclohydrolase IV family.

It carries out the reaction GTP + H2O = 7,8-dihydroneopterin 3'-triphosphate + formate + H(+). It functions in the pathway cofactor biosynthesis; 7,8-dihydroneopterin triphosphate biosynthesis; 7,8-dihydroneopterin triphosphate from GTP: step 1/1. Its function is as follows. Converts GTP to 7,8-dihydroneopterin triphosphate. The chain is GTP cyclohydrolase FolE2 from Delftia acidovorans (strain DSM 14801 / SPH-1).